Consider the following 285-residue polypeptide: Bifunctional protein FolD (285 aa).

NADP(+) contacts are provided by residues 166 to 168 (GAS) and isoleucine 232.

This sequence belongs to the tetrahydrofolate dehydrogenase/cyclohydrolase family. As to quaternary structure, homodimer.

It catalyses the reaction (6R)-5,10-methylene-5,6,7,8-tetrahydrofolate + NADP(+) = (6R)-5,10-methenyltetrahydrofolate + NADPH. It carries out the reaction (6R)-5,10-methenyltetrahydrofolate + H2O = (6R)-10-formyltetrahydrofolate + H(+). Its pathway is one-carbon metabolism; tetrahydrofolate interconversion. Its function is as follows. Catalyzes the oxidation of 5,10-methylenetetrahydrofolate to 5,10-methenyltetrahydrofolate and then the hydrolysis of 5,10-methenyltetrahydrofolate to 10-formyltetrahydrofolate. This is Bifunctional protein FolD from Vibrio atlanticus (strain LGP32) (Vibrio splendidus (strain Mel32)).